The primary structure comprises 124 residues: Late histone H2B.2.1 (124 aa).

Residues methionine 1–arginine 32 are disordered. A compositionally biased stretch (basic residues) spans glycine 10 to glycine 19. O-linked (GlcNAc) serine glycosylation is present at serine 111. A Glycyl lysine isopeptide (Lys-Gly) (interchain with G-Cter in ubiquitin) cross-link involves residue lysine 119.

Belongs to the histone H2B family. As to quaternary structure, the nucleosome is a histone octamer containing two molecules each of H2A, H2B, H3 and H4 assembled in one H3-H4 heterotetramer and two H2A-H2B heterodimers. The octamer wraps approximately 147 bp of DNA. In terms of processing, monoubiquitination of Lys-119 gives a specific tag for epigenetic transcriptional activation and is also prerequisite for histone H3 'Lys-4' and 'Lys-79' methylation. GlcNAcylation at Ser-111 promotes monoubiquitination of Lys-119. It fluctuates in response to extracellular glucose, and associates with transcribed genes.

It localises to the nucleus. Its subcellular location is the chromosome. Functionally, core component of nucleosome. Nucleosomes wrap and compact DNA into chromatin, limiting DNA accessibility to the cellular machineries which require DNA as a template. Histones thereby play a central role in transcription regulation, DNA repair, DNA replication and chromosomal stability. DNA accessibility is regulated via a complex set of post-translational modifications of histones, also called histone code, and nucleosome remodeling. The chain is Late histone H2B.2.1 from Psammechinus miliaris (Green sea urchin).